The primary structure comprises 646 residues: Serine/threonine-protein kinase max-2 (646 aa).

The segment at 19-40 is disordered; the sequence is FSPSDKDKDRDDEMKPSSSAMD. The span at 22-33 shows a compositional bias: basic and acidic residues; sequence SDKDKDRDDEMK. One can recognise a CRIB domain in the interval 41–54; that stretch reads ISQPYNTVHRVHVG. The disordered stretch occupies residues 136–345; it reads LQCSNGSATS…PPPPEEPPVR (210 aa). 2 stretches are compositionally biased toward low complexity: residues 142–157 and 167–180; these read SATSPSTSVSASSSSA and LSTASSTDTSLSLS. The span at 196-205 shows a compositional bias: polar residues; sequence SAPQLKTFTG. Pro residues predominate over residues 214 to 223; the sequence is SPFPPQPPVL. The span at 229 to 245 shows a compositional bias: low complexity; sequence TASAVATTTTNPTTSNG. Residues 246–262 show a composition bias toward pro residues; sequence APPPVPGSKGPPVPPKP. Composition is skewed to low complexity over residues 273-307 and 323-334; these read SSGCSSPQQYSSARSVGNSLSNGSVVSTTSSDGDV and KNGNTTTNKTTV. A Protein kinase domain is found at 376 to 627; sequence YEMKKQIGVG…TTELLAHPFL (252 aa). Residues 382–390 and lysine 405 each bind ATP; that span reads IGVGASGTV. Aspartate 496 acts as the Proton acceptor in catalysis.

It belongs to the protein kinase superfamily. STE Ser/Thr protein kinase family. STE20 subfamily. In terms of assembly, interacts with mlk-1; the interaction is independent of max-2 and mlk-1 kinase activities. Interacts with mig-2 (GTP-bound form). It depends on Mg(2+) as a cofactor.

Its subcellular location is the perikaryon. It is found in the cell projection. The protein localises to the dendrite. The protein resides in the cytoplasm. It catalyses the reaction L-seryl-[protein] + ATP = O-phospho-L-seryl-[protein] + ADP + H(+). It carries out the reaction L-threonyl-[protein] + ATP = O-phospho-L-threonyl-[protein] + ADP + H(+). Serine/threonine-protein kinase, which phosphorylates mlk-1. Involved in the stress response to heavy metals by activating the mlk-1/mek-1/kgb-1 pathway. In ventral cord commissural motoneurons, required for dorsal axon guidance downstream of unc-6/netrin repulsion receptor unc-5 and probably of Rho GTPases ced-10 and mig-2. Plays a redundant role with mig-10 in orientating axonal growth of HSN neurons. Plays a redundant role with pak-1 in P neuroblast migration and in distal tip cell (DTC)-mediated guidance of gonad elongation probably downstream of Rho GTPases. In association with pak-2, plays a role in embryogenesis. In association with pak-1, may be involved in spermatogenesis. The polypeptide is Serine/threonine-protein kinase max-2 (Caenorhabditis elegans).